Consider the following 120-residue polypeptide: Large ribosomal subunit protein uL18 (120 aa).

Belongs to the universal ribosomal protein uL18 family. Part of the 50S ribosomal subunit; part of the 5S rRNA/L5/L18/L25 subcomplex. Contacts the 5S and 23S rRNAs.

Its function is as follows. This is one of the proteins that bind and probably mediate the attachment of the 5S RNA into the large ribosomal subunit, where it forms part of the central protuberance. The protein is Large ribosomal subunit protein uL18 of Rhizobium leguminosarum bv. trifolii (strain WSM2304).